We begin with the raw amino-acid sequence, 289 residues long: MPANAAAPLYAKERYEFNKLQKRLRRLTGQAIADYGMIQEGDRVMVCLSGGKDSFTLLDILLKLRINAPVNFDLVAVNLDQKQPGFPADVLPNYLSEQGIPFHIIEQDTYSVVKSIIPEGKTTCGLCSRLRRGLLYRYAADHGITKIALGHHRDDILETFFLNLFYGGTLKAMPPKLLSDDRRHIVIRPLAYCKEEDIARYARIRAFPIIPCNLCGSQENLQRQAMKAMLKDWEKRHPGRVETVFTALQNVAPSQLADSRLFDFAALDSLRNTAETTPEHGAGLDILSR.

The short motif at 49–54 is the PP-loop motif element; the sequence is SGGKDS. Residues Cys-124, Cys-127, and Cys-215 each contribute to the [4Fe-4S] cluster site.

Belongs to the TtcA family. In terms of assembly, homodimer. Mg(2+) is required as a cofactor. Requires [4Fe-4S] cluster as cofactor.

Its subcellular location is the cytoplasm. The enzyme catalyses cytidine(32) in tRNA + S-sulfanyl-L-cysteinyl-[cysteine desulfurase] + AH2 + ATP = 2-thiocytidine(32) in tRNA + L-cysteinyl-[cysteine desulfurase] + A + AMP + diphosphate + H(+). Its pathway is tRNA modification. Functionally, catalyzes the ATP-dependent 2-thiolation of cytidine in position 32 of tRNA, to form 2-thiocytidine (s(2)C32). The sulfur atoms are provided by the cysteine/cysteine desulfurase (IscS) system. The protein is tRNA-cytidine(32) 2-sulfurtransferase of Methylococcus capsulatus (strain ATCC 33009 / NCIMB 11132 / Bath).